We begin with the raw amino-acid sequence, 101 residues long: Small ribosomal subunit protein uS14 (101 aa).

Positions 1 to 10 are enriched in basic and acidic residues; it reads MAKKSSIEKN. A disordered region spans residues 1–23; it reads MAKKSSIEKNNRRKRMTGNAAAK.

It belongs to the universal ribosomal protein uS14 family. In terms of assembly, part of the 30S ribosomal subunit. Contacts proteins S3 and S10.

Binds 16S rRNA, required for the assembly of 30S particles and may also be responsible for determining the conformation of the 16S rRNA at the A site. The protein is Small ribosomal subunit protein uS14 of Nitrobacter hamburgensis (strain DSM 10229 / NCIMB 13809 / X14).